The primary structure comprises 396 residues: Dimethyladenosine transferase 2, mitochondrial (396 aa).

A mitochondrion-targeting transit peptide spans Met-1 to Phe-43. Positions Phe-43–Thr-71 are disordered. The S-adenosyl-L-methionine site is built by Ile-74, Glu-123, and Asp-149. The tract at residues Lys-328–Arg-329 is DNA-binding.

It belongs to the class I-like SAM-binding methyltransferase superfamily. rRNA adenine N(6)-methyltransferase family. KsgA subfamily. In terms of assembly, homodimer. Component of the mitochondrial transcription initiation complex, composed at least of TFB2M, TFAM and POLRMT. In this complex TFAM recruits POLRMT to the promoter whereas TFB2M induces structural changes in POLRMT to enable promoter opening and trapping of the DNA non-template strand. Interacts with mitochondrial RNA polymerase POLRMT. Interacts with TFAM. As to expression, ubiquitously expressed.

Its subcellular location is the mitochondrion. It catalyses the reaction adenosine in rRNA + S-adenosyl-L-methionine = N(6)-methyladenosine in rRNA + S-adenosyl-L-homocysteine + H(+). Functionally, S-adenosyl-L-methionine-dependent rRNA methyltransferase which may methylate two specific adjacent adenosines in the loop of a conserved hairpin near the 3'-end of 12S mitochondrial rRNA. Component of the mitochondrial transcription initiation complex, composed at least of TFB2M, TFAM and POLRMT that is required for basal transcription of mitochondrial DNA. In this complex, TFAM recruits POLRMT to a specific promoter whereas TFB2M induces structural changes in POLRMT to enable promoter opening and trapping of the DNA non-template strand. Stimulates transcription independently of the methyltransferase activity. The polypeptide is Dimethyladenosine transferase 2, mitochondrial (Mus musculus (Mouse)).